We begin with the raw amino-acid sequence, 158 residues long: Crossover junction endodeoxyribonuclease RuvC (158 aa).

Catalysis depends on residues D7, E66, and D139. The Mg(2+) site is built by D7, E66, and D139.

Belongs to the RuvC family. Homodimer which binds Holliday junction (HJ) DNA. The HJ becomes 2-fold symmetrical on binding to RuvC with unstacked arms; it has a different conformation from HJ DNA in complex with RuvA. In the full resolvosome a probable DNA-RuvA(4)-RuvB(12)-RuvC(2) complex forms which resolves the HJ. It depends on Mg(2+) as a cofactor.

The protein resides in the cytoplasm. The catalysed reaction is Endonucleolytic cleavage at a junction such as a reciprocal single-stranded crossover between two homologous DNA duplexes (Holliday junction).. In terms of biological role, the RuvA-RuvB-RuvC complex processes Holliday junction (HJ) DNA during genetic recombination and DNA repair. Endonuclease that resolves HJ intermediates. Cleaves cruciform DNA by making single-stranded nicks across the HJ at symmetrical positions within the homologous arms, yielding a 5'-phosphate and a 3'-hydroxyl group; requires a central core of homology in the junction. The consensus cleavage sequence is 5'-(A/T)TT(C/G)-3'. Cleavage occurs on the 3'-side of the TT dinucleotide at the point of strand exchange. HJ branch migration catalyzed by RuvA-RuvB allows RuvC to scan DNA until it finds its consensus sequence, where it cleaves and resolves the cruciform DNA. In Carboxydothermus hydrogenoformans (strain ATCC BAA-161 / DSM 6008 / Z-2901), this protein is Crossover junction endodeoxyribonuclease RuvC.